Here is a 194-residue protein sequence, read N- to C-terminus: PBAN-type neuropeptides (194 aa).

Positions 1-23 (MFNQTQLFVFLAVFTTSSVLGNN) are cleaved as a signal peptide. Leu47 is subject to Leucine amide. The propeptide occupies 51–94 (SLRISTEDNRQAFFKLLEAADALKYYYDQLPYEMQADEPETRVT). Leu103, Leu123, Leu159, and Leu169 each carry leucine amide. A propeptide spanning residues 172–194 (ELSYDMMPNKIRVVRSTNKTRST) is cleaved from the precursor.

The protein belongs to the pyrokinin family. In terms of tissue distribution, expressed in the subesophageal ganglions. Not found in corpora cardiaca, corpora allata and thoracic ganglia.

It localises to the secreted. Functionally, a hormone that controls sex pheromone production in females and pheromone responsiveness in male. Also mediates visceral muscle contractile activity (myotropic activity). In Helicoverpa zea (Corn earworm moth), this protein is PBAN-type neuropeptides.